A 424-amino-acid polypeptide reads, in one-letter code: MAANSGLDSKVEYYRLQENEIISAVSSEDADQNDAGFRLSTIHLHLFHGLKFAALLFTVVPVFIILDSMKIIFQRKRRFCLDHVNRSFLRQSSWILDERICQYVLNPLFVCLYPSTFSSPTYVKCNIPIEDQKSPENNIFQDHQLNAPKIVSTKFYQYVMPEGFDPTTDPVLVFYHGGGYALKLTPTSFSFLNNMRNAFPKMAILVPDYTVTATDDQSKKYPLQILQNVAIFDYVVKTMGCKNVVIMGDSAGGNAVLNIVLYLRKCHREIYPKKVIAISPWANATFFHEGEKEYMQGTQEWDGLCLKSHSMFGRMFVGNNPNVDFTSDPFVNIEKNFETKMWQDILKKCSVMITYGSDELLSFQNKILAKKMSDASEGCNHFTAKNVLVEHQGYHTGPILNYSRNMDRWTNIPSIARILEFMQS.

Alanine 2 bears the N-acetylalanine mark. Residues 2–45 (AANSGLDSKVEYYRLQENEIISAVSSEDADQNDAGFRLSTIHLH) lie on the Cytoplasmic side of the membrane. Residues 46–66 (LFHGLKFAALLFTVVPVFIIL) traverse the membrane as a helical; Signal-anchor for type II membrane protein segment. Residues 67–424 (DSMKIIFQRK…IARILEFMQS (358 aa)) are Lumenal-facing. The N-linked (GlcNAc...) asparagine glycan is linked to asparagine 85. The Involved in the stabilization of the negatively charged intermediate by the formation of the oxyanion hole signature appears at 176 to 178 (HGG). Serine 250 is an active-site residue. Residue asparagine 283 is glycosylated (N-linked (GlcNAc...) asparagine). Histidine 395 is a catalytic residue. N-linked (GlcNAc...) asparagine glycosylation is present at asparagine 401.

The protein belongs to the 'GDXG' lipolytic enzyme family.

It localises to the endoplasmic reticulum membrane. Functionally, required for the deacetylation of acetylated sterols. Involved in the resistance to eugenol and pregnenolone toxicity. The protein is Steryl acetyl hydrolase 1 (SAY1) of Saccharomyces cerevisiae (strain ATCC 204508 / S288c) (Baker's yeast).